The primary structure comprises 118 residues: uncharacterized protein (118 aa).

A run of 4 helical transmembrane segments spans residues 12-32 (IISLVSLSVIFGAMLSGFATF), 39-59 (LMPHFASLMIAFILTLASLFI), 63-83 (IIGYLAIAFQVITPLTVCPTI), and 98-118 (SAHLALMGMMFILALGNVILF).

Its subcellular location is the cell membrane. This is an uncharacterized protein from Methanocaldococcus jannaschii (strain ATCC 43067 / DSM 2661 / JAL-1 / JCM 10045 / NBRC 100440) (Methanococcus jannaschii).